The chain runs to 576 residues: Arginine--tRNA ligase (576 aa).

The 'HIGH' region signature appears at 122–132; that stretch reads PNVAKQMHVGH.

It belongs to the class-I aminoacyl-tRNA synthetase family. Monomer.

Its subcellular location is the cytoplasm. It carries out the reaction tRNA(Arg) + L-arginine + ATP = L-arginyl-tRNA(Arg) + AMP + diphosphate. The sequence is that of Arginine--tRNA ligase from Yersinia pseudotuberculosis serotype O:3 (strain YPIII).